Consider the following 214-residue polypeptide: Membrane-spanning 4-domains subfamily A member 3 (214 aa).

The segment at 1-31 (MASHEVDNAELGSASAHGTPGSEAGPEELNT) is disordered. At 1–49 (MASHEVDNAELGSASAHGTPGSEAGPEELNTSVYQPIDGSPDYQKAKLQ) the chain is on the cytoplasmic side. The chain crosses the membrane as a helical span at residues 50–70 (VLGAIQILNAAMILALGVFLG). Topologically, residues 71 to 81 (SLQYPYHFQKH) are extracellular. The chain crosses the membrane as a helical span at residues 82–102 (FFFFTFYTGYPIWGAVFFCSS). At 103–124 (GTLSVVAGIKPTRTWIQNSFGM) the chain is on the cytoplasmic side. A helical transmembrane segment spans residues 125–145 (NIASATIALVGTAFLSLNIAV). The Extracellular portion of the chain corresponds to 146-175 (NIQSLRSCHSSSESPDLCNYMGSISNGMVS). Residues 176-196 (LLLILTLLELCVTISTIAMWC) form a helical membrane-spanning segment. Residues 197 to 214 (NANCCNSREEISSPPNSV) lie on the Cytoplasmic side of the membrane.

This sequence belongs to the MS4A family. In terms of assembly, interacts with CDKN3. Interacts with CDKN3-CDK2 complexes through its binding to CDKN3; this interaction facilitates dissociation of cyclin A from CDKN3-CDK2 complexes. As to expression, expressed specifically in hematopoietic cells and tissues.

The protein localises to the endomembrane system. It localises to the cytoplasm. The protein resides in the perinuclear region. In terms of biological role, hematopoietic modulator for the G1-S cell cycle transition. Modulates the level of phosphorylation of cyclin-dependent kinase 2 (CDK2) through its direct binding to cyclin-dependent kinase inhibitor 3 (CDKN3/KAP). This Homo sapiens (Human) protein is Membrane-spanning 4-domains subfamily A member 3 (MS4A3).